Reading from the N-terminus, the 541-residue chain is Glucose-6-phosphate isomerase (541 aa).

E346 acts as the Proton donor in catalysis. Residues H377 and K506 contribute to the active site.

It belongs to the GPI family.

The protein resides in the cytoplasm. It catalyses the reaction alpha-D-glucose 6-phosphate = beta-D-fructose 6-phosphate. It functions in the pathway carbohydrate biosynthesis; gluconeogenesis. The protein operates within carbohydrate degradation; glycolysis; D-glyceraldehyde 3-phosphate and glycerone phosphate from D-glucose: step 2/4. Its function is as follows. Catalyzes the reversible isomerization of glucose-6-phosphate to fructose-6-phosphate. In Rhizobium rhizogenes (strain K84 / ATCC BAA-868) (Agrobacterium radiobacter), this protein is Glucose-6-phosphate isomerase.